A 399-amino-acid polypeptide reads, in one-letter code: Multi-drug resistance efflux pump PmrA (399 aa).

10 helical membrane-spanning segments follow: residues 12-34 (IAWFGNFLTGASISLVVPFMPIF), 49-71 (AGLAISVSAISAALFSPIWGILA), 84-106 (GLAMTITMGGLAFVPNIYWLIFL), 140-162 (LSTGVVAGTLTGPFIGGFIAELF), 167-186 (VFLLVGSFLFLAAILTICFI), 217-239 (LFLTSFVIQFSAQSIGPILALYV), 248-270 (LLFVSGLIVSSMGFSSMMSAGVM), 306-328 (LGLYRFLFGLGTGALIPGVNALL), 340-362 (VFAFNQVFFYLGGVVGPMAGSAV), and 366-388 (FGYHAVFYATSLCVAFSCLFNLI).

Belongs to the major facilitator superfamily. TCR/Tet family.

It is found in the cell membrane. Efflux pump for various substrates. The protein is Multi-drug resistance efflux pump PmrA (pmrA) of Streptococcus pneumoniae serotype 4 (strain ATCC BAA-334 / TIGR4).